A 205-amino-acid polypeptide reads, in one-letter code: Methylamine utilization protein MauD (205 aa).

The helical transmembrane segment at 5–25 (IMIASNVLLWGAFLALAALML) threads the bilayer. The 135-residue stretch at 50 to 184 (PDIGERSPVF…VESLFETTRV (135 aa)) folds into the Thioredoxin domain.

It is found in the membrane. It functions in the pathway one-carbon metabolism; methylamine degradation. Its function is as follows. May be specifically involved in the processing, transport, and/or maturation of the MADH beta-subunit. In Methylobacillus flagellatus (strain ATCC 51484 / DSM 6875 / VKM B-1610 / KT), this protein is Methylamine utilization protein MauD (mauD).